A 557-amino-acid chain; its full sequence is Phosphoacetylglucosamine mutase (557 aa).

The active-site Phosphoserine intermediate is the S67. Positions 67, 298, 300, and 302 each coordinate Mg(2+). The residue at position 67 (S67) is a Phosphoserine. Substrate contacts are provided by residues 395 to 397 (EAN), 522 to 526 (RASGT), and R531.

It belongs to the phosphohexose mutase family. Mg(2+) is required as a cofactor.

It localises to the cytoplasm. The protein resides in the nucleus. It carries out the reaction N-acetyl-alpha-D-glucosamine 1-phosphate = N-acetyl-D-glucosamine 6-phosphate. Its pathway is nucleotide-sugar biosynthesis; UDP-N-acetyl-alpha-D-glucosamine biosynthesis; N-acetyl-alpha-D-glucosamine 1-phosphate from alpha-D-glucosamine 6-phosphate (route I): step 2/2. Its function is as follows. Catalyzes the conversion of GlcNAc-6-P into GlcNAc-1-P during the synthesis of uridine diphosphate/UDP-GlcNAc, which is a biosynthetic precursor of chitin and also supplies the amino sugars for N-linked oligosaccharides of glycoproteins. Also has phosphoglucomutase activity. The protein is Phosphoacetylglucosamine mutase of Saccharomyces cerevisiae (strain ATCC 204508 / S288c) (Baker's yeast).